Reading from the N-terminus, the 216-residue chain is Putative transmembrane protein RNF32-DT (216 aa).

The helical transmembrane segment at 177–197 (WIPLLLVAGCVSCFVGLAVCV) threads the bilayer.

Expressed only in testis.

Its subcellular location is the cytoplasm. It is found in the membrane. This chain is Putative transmembrane protein RNF32-DT, found in Homo sapiens (Human).